A 145-amino-acid polypeptide reads, in one-letter code: Transcription antitermination protein NusB (145 aa).

The protein belongs to the NusB family.

Functionally, involved in transcription antitermination. Required for transcription of ribosomal RNA (rRNA) genes. Binds specifically to the boxA antiterminator sequence of the ribosomal RNA (rrn) operons. This Burkholderia mallei (strain NCTC 10247) protein is Transcription antitermination protein NusB.